The following is a 402-amino-acid chain: Arginine biosynthesis bifunctional protein ArgJ (402 aa).

Substrate contacts are provided by Thr152, Lys178, Thr189, Glu275, Asn397, and Thr402. Residue Thr189 is the Nucleophile of the active site.

It belongs to the ArgJ family. As to quaternary structure, heterotetramer of two alpha and two beta chains.

It is found in the cytoplasm. The enzyme catalyses N(2)-acetyl-L-ornithine + L-glutamate = N-acetyl-L-glutamate + L-ornithine. The catalysed reaction is L-glutamate + acetyl-CoA = N-acetyl-L-glutamate + CoA + H(+). It participates in amino-acid biosynthesis; L-arginine biosynthesis; L-ornithine and N-acetyl-L-glutamate from L-glutamate and N(2)-acetyl-L-ornithine (cyclic): step 1/1. The protein operates within amino-acid biosynthesis; L-arginine biosynthesis; N(2)-acetyl-L-ornithine from L-glutamate: step 1/4. Catalyzes two activities which are involved in the cyclic version of arginine biosynthesis: the synthesis of N-acetylglutamate from glutamate and acetyl-CoA as the acetyl donor, and of ornithine by transacetylation between N(2)-acetylornithine and glutamate. The protein is Arginine biosynthesis bifunctional protein ArgJ of Lactiplantibacillus plantarum (strain ATCC BAA-793 / NCIMB 8826 / WCFS1) (Lactobacillus plantarum).